A 211-amino-acid chain; its full sequence is MQAILAAAMAAQTLLFSATAPPASLFQSPSSARPFHSLRLAAGPAGAAAARALVVADATKKAVAVLKGTSQVEGVVTLTQDDQGPTTVNVRVTGLTPGLHGFHLHEFGDTTNGCISTGPHFNPNNLTHGAPEDEVRHAGDLGNIVANAEGVAEATIVDKQIPLSGPNSVVGRAFVVHELEDDLGKGGHELSLSTGNAGGRLACGVVGLTPL.

The transit peptide at 1–57 (MQAILAAAMAAQTLLFSATAPPASLFQSPSSARPFHSLRLAAGPAGAAAARALVVAD) directs the protein to the chloroplast. Residues His-103, His-105, and His-120 each contribute to the Cu cation site. An intrachain disulfide couples Cys-114 to Cys-203. Zn(2+)-binding residues include His-120, His-128, His-137, and Asp-140. His-177 is a binding site for Cu cation.

This sequence belongs to the Cu-Zn superoxide dismutase family. Homotetramer. Cu cation serves as cofactor. Requires Zn(2+) as cofactor.

The protein localises to the plastid. It is found in the chloroplast. It catalyses the reaction 2 superoxide + 2 H(+) = H2O2 + O2. Destroys radicals which are normally produced within the cells and which are toxic to biological systems. The sequence is that of Superoxide dismutase [Cu-Zn], chloroplastic (SODCP) from Oryza sativa subsp. japonica (Rice).